We begin with the raw amino-acid sequence, 347 residues long: tRNA pseudouridine synthase D (347 aa).

Catalysis depends on Asp81, which acts as the Nucleophile. The region spanning 158 to 305 is the TRUD domain; sequence GVPNYFGSQR…RHDRRDIALK (148 aa).

It belongs to the pseudouridine synthase TruD family.

The enzyme catalyses uridine(13) in tRNA = pseudouridine(13) in tRNA. Functionally, responsible for synthesis of pseudouridine from uracil-13 in transfer RNAs. The sequence is that of tRNA pseudouridine synthase D from Vibrio campbellii (strain ATCC BAA-1116).